Reading from the N-terminus, the 161-residue chain is Pleiotrophin-B (161 aa).

The signal sequence occupies residues 1–23 (MHHQHGLFMLALLAFLLVMTVLG). 5 disulfide bridges follow: cysteine 41–cysteine 70, cysteine 49–cysteine 79, cysteine 56–cysteine 83, cysteine 93–cysteine 125, and cysteine 103–cysteine 135. Chondroitin sulfate binding regions lie at residues 86-93 (KKQFGAEC) and 117-125 (KRALHNAEC). The segment at 136–161 (GKVTKPKLQESKKKKKEGKNKEKLLD) is disordered. The chondroitin sulfate A binding stretch occupies residues 141 to 161 (PKLQESKKKKKEGKNKEKLLD).

It belongs to the pleiotrophin family. In terms of tissue distribution, expressed in high levels in brain and eye. Lower levels in bone. In the tailbud embryo stage, it is expressed exclusively in the central nervous system, especially in the hind region of the brain.

The protein resides in the secreted. In terms of biological role, secreted growth factor that mediates its signal through cell-surface proteoglycan and non-proteoglycan receptors. Binds cell-surface proteoglycan receptor via their chondroitin sulfate (CS) groups. Thereby regulates many processes like cell proliferation, cell survival, cell growth, cell differentiation and cell migration. Has antibacterial activity against both Gram-positive and Gram-negative bacteria. This chain is Pleiotrophin-B (ptn-b), found in Xenopus laevis (African clawed frog).